Consider the following 227-residue polypeptide: Cytochrome c oxidase subunit 2 (227 aa).

Residues 1 to 14 (MAYPLQLGFQDATS) lie on the Mitochondrial intermembrane side of the membrane. Residues 15-45 (PIMEELLHFHDHTLMIVFLISSLVLYIISLM) form a helical membrane-spanning segment. The Mitochondrial matrix portion of the chain corresponds to 46–59 (LTTKLTHTSTMDAQ). A helical membrane pass occupies residues 60-87 (EVETIWTILPAIILILIALPSLRILYMM). At 88 to 227 (DEINNPSLTI…HFEKWSTSML (140 aa)) the chain is on the mitochondrial intermembrane side. Histidine 161, cysteine 196, glutamate 198, cysteine 200, histidine 204, and methionine 207 together coordinate Cu cation. A Mg(2+)-binding site is contributed by glutamate 198.

Belongs to the cytochrome c oxidase subunit 2 family. In terms of assembly, component of the cytochrome c oxidase (complex IV, CIV), a multisubunit enzyme composed of 14 subunits. The complex is composed of a catalytic core of 3 subunits MT-CO1, MT-CO2 and MT-CO3, encoded in the mitochondrial DNA, and 11 supernumerary subunits COX4I, COX5A, COX5B, COX6A, COX6B, COX6C, COX7A, COX7B, COX7C, COX8 and NDUFA4, which are encoded in the nuclear genome. The complex exists as a monomer or a dimer and forms supercomplexes (SCs) in the inner mitochondrial membrane with NADH-ubiquinone oxidoreductase (complex I, CI) and ubiquinol-cytochrome c oxidoreductase (cytochrome b-c1 complex, complex III, CIII), resulting in different assemblies (supercomplex SCI(1)III(2)IV(1) and megacomplex MCI(2)III(2)IV(2)). Found in a complex with TMEM177, COA6, COX18, COX20, SCO1 and SCO2. Interacts with TMEM177 in a COX20-dependent manner. Interacts with COX20. Interacts with COX16. It depends on Cu cation as a cofactor.

The protein resides in the mitochondrion inner membrane. It catalyses the reaction 4 Fe(II)-[cytochrome c] + O2 + 8 H(+)(in) = 4 Fe(III)-[cytochrome c] + 2 H2O + 4 H(+)(out). Functionally, component of the cytochrome c oxidase, the last enzyme in the mitochondrial electron transport chain which drives oxidative phosphorylation. The respiratory chain contains 3 multisubunit complexes succinate dehydrogenase (complex II, CII), ubiquinol-cytochrome c oxidoreductase (cytochrome b-c1 complex, complex III, CIII) and cytochrome c oxidase (complex IV, CIV), that cooperate to transfer electrons derived from NADH and succinate to molecular oxygen, creating an electrochemical gradient over the inner membrane that drives transmembrane transport and the ATP synthase. Cytochrome c oxidase is the component of the respiratory chain that catalyzes the reduction of oxygen to water. Electrons originating from reduced cytochrome c in the intermembrane space (IMS) are transferred via the dinuclear copper A center (CU(A)) of subunit 2 and heme A of subunit 1 to the active site in subunit 1, a binuclear center (BNC) formed by heme A3 and copper B (CU(B)). The BNC reduces molecular oxygen to 2 water molecules using 4 electrons from cytochrome c in the IMS and 4 protons from the mitochondrial matrix. The polypeptide is Cytochrome c oxidase subunit 2 (MT-CO2) (Rhinoceros unicornis (Greater Indian rhinoceros)).